We begin with the raw amino-acid sequence, 29 residues long: Cyclotide psyleio B (29 aa).

The cyclopeptide (Gly-Arg) cross-link spans 1-29 (GDLPICGETCFGGTCNTPGCVCAWPVCNR). 3 disulfides stabilise this stretch: C6–C20, C10–C22, and C15–C27.

In terms of processing, this is a cyclic peptide.

Functionally, probably participates in a plant defense mechanism. The polypeptide is Cyclotide psyleio B (Psychotria brachyceras).